The primary structure comprises 139 residues: D-ribose pyranase (139 aa).

His-20 (proton donor) is an active-site residue. Substrate contacts are provided by residues Asp-28, His-106, and 128–130; that span reads YAN.

This sequence belongs to the RbsD / FucU family. RbsD subfamily. As to quaternary structure, homodecamer.

It localises to the cytoplasm. It carries out the reaction beta-D-ribopyranose = beta-D-ribofuranose. It functions in the pathway carbohydrate metabolism; D-ribose degradation; D-ribose 5-phosphate from beta-D-ribopyranose: step 1/2. Its function is as follows. Catalyzes the interconversion of beta-pyran and beta-furan forms of D-ribose. This Pasteurella multocida (strain Pm70) protein is D-ribose pyranase.